The chain runs to 315 residues: T cell receptor beta chain MC.7.G5 (315 aa).

An N-terminal signal peptide occupies residues 1 to 21 (MTIRLLCYMGFYFLGAGLMEA). Positions 22 to 114 (DIYQTPRYLV…TSQYLCASSE (93 aa)) constitute an Ig-like V-type domain. The tract at residues 22 to 114 (DIYQTPRYLV…TSQYLCASSE (93 aa)) is t cell receptor beta variable 25-1. Cysteine 42 and cysteine 110 are disulfide-bonded. Residues 46 to 50 (MGHDK) form a CDR1 region. The segment at 68–73 (SYGVNS) is CDR2. The N-linked (GlcNAc...) asparagine glycan is linked to asparagine 72. The interval 110 to 127 (CASSEARGLAEFTDTQYF) is CDR3. Residues 122–136 (TDTQYFGPGTRLTVL) are t cell receptor beta joining 2-3. Residues 138-315 (DLKNVFPPEV…AMVKRKDSRG (178 aa)) are t cell receptor beta constant 2. The 110-residue stretch at 145 to 254 (PEVAVFEPSE…WTQDRAKPVT (110 aa)) folds into the Ig-like C1-type domain. Cysteine 167 and cysteine 232 are joined by a disulfide. N-linked (GlcNAc...) asparagine glycosylation is present at asparagine 206. Residues 267–281 (CGFTSESYQQGVLSA) form a connecting peptide region. The chain crosses the membrane as a helical span at residues 282-304 (TILYEILLGKATLYAVLVSALVL). The Cytoplasmic portion of the chain corresponds to 305–315 (MAMVKRKDSRG).

As to quaternary structure, disulfide-linked heterodimer with TRAV38-2DV8*01J31*01C*01 alpha chain. The alpha-beta TR associates with the transmembrane signaling CD3 coreceptor proteins to form the TR-CD3 (TCR). The assembly of alpha-beta TR heterodimers with CD3 occurs in the endoplasmic reticulum where a single alpha-beta TR heterodimer associates with one CD3D-CD3E heterodimer, one CD3G-CD3E heterodimer and one CD247 homodimer forming a stable octameric structure. CD3D-CD3E and CD3G-CD3E heterodimers preferentially associate with TR alpha and TR beta chains (via TM domain), respectively. The association of the CD247 homodimer is the last step of TCR assembly in the endoplasmic reticulum and is required for transport to the cell surface. Expressed in MR1-restricted CD8-positive T cells.

It is found in the cell membrane. The beta chain of TRAV38-2DV8*01J31*01C*01/TRBV25-1*01J2S3*01C2*01 alpha-beta T cell receptor (TR) clonotype that displays pan-cancer cell recognition via the invariant MR1 molecule. On CD8-positive T cell clone MC.7.G5, likely recognizes tumor-specific or -associated metabolite(s) essential for cancer cell survival, triggering killing of many cancer cell types including lung, melanoma, leukemia, colon, breast, prostate, bone and ovarian cancer cells. Mediates cancer cell cytotoxicity in an HLA-independent manner. Has no reactivity to healthy cells even stressed or infected by bacteria. Antigen recognition initiates TR-CD3 clustering on the cell surface and intracellular activation of LCK that phosphorylates the ITAM motifs of CD3G, CD3D, CD3E and CD247 enabling the recruitment of ZAP70. In turn, ZAP70 phosphorylates LAT, which recruits numerous signaling molecules to form the LAT signalosome. The LAT signalosome propagates signal branching to three major signaling pathways, the calcium, the mitogen-activated protein kinase (MAPK) kinase and the nuclear factor NF-kappa-B (NF-kB) pathways, leading to the mobilization of transcription factors that are critical for gene expression and essential for T cell differentiation into effector/memory T cells. This chain is T cell receptor beta chain MC.7.G5, found in Homo sapiens (Human).